Here is a 239-residue protein sequence, read N- to C-terminus: Glutathione S-transferase verG (239 aa).

The region spanning 18–101 (KPLIFVMEGR…YLSNKYDAKR (84 aa)) is the GST N-terminal domain. The region spanning 107-237 (NAAENLEICN…ELDSRKEIAI (131 aa)) is the GST C-terminal domain.

The protein belongs to the GST superfamily.

The enzyme catalyses RX + glutathione = an S-substituted glutathione + a halide anion + H(+). It participates in mycotoxin biosynthesis. In terms of biological role, glutathione S-transferase; part of the gene cluster that mediates the biosynthesis of 11'-deoxyverticillin A, one of the dimeric epipolythiodioxopiperazines (ETPs) from the verticillin family that act as mycotoxins. 11'-deoxyverticillin A is required for normal conidiation. The nonribosomal peptide synthetase verP is speculated to be responsible for condensation of amino acids to form the carbon skeleton of verticillin, whereas the cluster-specific tailoring enzymes are involved in further modifications leading to the production of 11'-deoxyverticillin A. This is Glutathione S-transferase verG from Clonostachys rogersoniana.